The following is a 157-amino-acid chain: ATP synthase subunit b (157 aa).

Residues 1–21 (MHFLDESFWLAISFIIFVYLI) form a helical membrane-spanning segment.

The protein belongs to the ATPase B chain family. As to quaternary structure, F-type ATPases have 2 components, F(1) - the catalytic core - and F(0) - the membrane proton channel. F(1) has five subunits: alpha(3), beta(3), gamma(1), delta(1), epsilon(1). F(0) has three main subunits: a(1), b(2) and c(10-14). The alpha and beta chains form an alternating ring which encloses part of the gamma chain. F(1) is attached to F(0) by a central stalk formed by the gamma and epsilon chains, while a peripheral stalk is formed by the delta and b chains.

The protein localises to the cell inner membrane. F(1)F(0) ATP synthase produces ATP from ADP in the presence of a proton or sodium gradient. F-type ATPases consist of two structural domains, F(1) containing the extramembraneous catalytic core and F(0) containing the membrane proton channel, linked together by a central stalk and a peripheral stalk. During catalysis, ATP synthesis in the catalytic domain of F(1) is coupled via a rotary mechanism of the central stalk subunits to proton translocation. In terms of biological role, component of the F(0) channel, it forms part of the peripheral stalk, linking F(1) to F(0). The protein is ATP synthase subunit b of Rickettsia bellii (strain RML369-C).